A 651-amino-acid chain; its full sequence is Peptide-N(4)-(N-acetyl-beta-glucosaminyl)asparagine amidase (651 aa).

Positions 29-90 (EASRLLLTYA…EGETHMVFPK (62 aa)) constitute a PUB domain. The Zn(2+) site is built by C246, C249, C279, and C282. C305 acts as the Nucleophile in catalysis. Active-site residues include H332 and D349. Residues 450–651 (EFGGRTSGSM…LEMIIKLADL (202 aa)) enclose the PAW domain.

This sequence belongs to the transglutaminase-like superfamily. PNGase family. It depends on Zn(2+) as a cofactor.

Its subcellular location is the cytoplasm. The enzyme catalyses Hydrolysis of an N(4)-(acetyl-beta-D-glucosaminyl)asparagine residue in which the glucosamine residue may be further glycosylated, to yield a (substituted) N-acetyl-beta-D-glucosaminylamine and a peptide containing an aspartate residue.. In terms of biological role, specifically deglycosylates the denatured form of N-linked glycoproteins in the cytoplasm and assists their proteasome-mediated degradation. Cleaves the beta-aspartyl-glucosamine (GlcNAc) of the glycan and the amide side chain of Asn, converting Asn to Asp. Prefers proteins containing high-mannose over those bearing complex type oligosaccharides. Can recognize misfolded proteins in the endoplasmic reticulum that are exported to the cytosol to be destroyed and deglycosylate them, while it has no activity toward native proteins. Deglycosylation is a prerequisite for subsequent proteasome-mediated degradation of some, but not all, misfolded glycoproteins. The protein is Peptide-N(4)-(N-acetyl-beta-glucosaminyl)asparagine amidase (NGLY1) of Gallus gallus (Chicken).